The following is a 172-amino-acid chain: 3-hydroxydecanoyl-[acyl-carrier-protein] dehydratase (172 aa).

Residue His-71 is part of the active site.

Belongs to the thioester dehydratase family. FabA subfamily. Homodimer.

The protein localises to the cytoplasm. The enzyme catalyses a (3R)-hydroxyacyl-[ACP] = a (2E)-enoyl-[ACP] + H2O. The catalysed reaction is (3R)-hydroxydecanoyl-[ACP] = (2E)-decenoyl-[ACP] + H2O. It catalyses the reaction (2E)-decenoyl-[ACP] = (3Z)-decenoyl-[ACP]. Its pathway is lipid metabolism; fatty acid biosynthesis. In terms of biological role, necessary for the introduction of cis unsaturation into fatty acids. Catalyzes the dehydration of (3R)-3-hydroxydecanoyl-ACP to E-(2)-decenoyl-ACP and then its isomerization to Z-(3)-decenoyl-ACP. Can catalyze the dehydratase reaction for beta-hydroxyacyl-ACPs with saturated chain lengths up to 16:0, being most active on intermediate chain length. The protein is 3-hydroxydecanoyl-[acyl-carrier-protein] dehydratase of Blochmanniella floridana.